Reading from the N-terminus, the 250-residue chain is MNVRRVESISAQLEEASSTGGFLYAQNNTKRSIKERLMKLLPCSAAKTSSPAIQNSVEDELEMATVRHRPEALELLEAQSKFTKKELQILYRGFKNECPSGVVNEETFKEIYSQFFPQGDSTTYAHFLFNAFDTDHNGAVSFEDFIKGLSILLRGTVQEKLNWAFNLYDINKDGYITKEEMLDIMKAIYDMMGKCTYPVLKEDAPRQHVETFFQKMDKNKDGVVTIDEFIESCQKDENIMRSMQLFENVI.

The tract at residues 2-44 is KIS; it reads NVRRVESISAQLEEASSTGGFLYAQNNTKRSIKERLMKLLPCS. Residues Ser-17 and Ser-56 each carry the phosphoserine modification. One can recognise an EF-hand 1; degenerate domain in the interval 61 to 117; sequence LEMATVRHRPEALELLEAQSKFTKKELQILYRGFKNECPSGVVNEETFKEIYSQFFP. 3 EF-hand domains span residues 120–155, 156–191, and 204–239; these read DSTT…LLRG, TVQE…IYDM, and APRQ…DENI. The Ca(2+) site is built by Asp-133, Asp-135, Asn-137, Asp-144, Asp-169, Asn-171, Asp-173, Tyr-175, Glu-180, Asp-217, Asn-219, Asp-221, and Glu-228. The segment at 237-250 is interaction with KCND2; it reads ENIMRSMQLFENVI.

This sequence belongs to the recoverin family. Component of heteromultimeric potassium channels. Identified in potassium channel complexes containing KCND1, KCND2, KCND3, KCNIP1, KCNIP2, KCNIP3, KCNIP4, DPP6 and DPP10. Interacts with the C-terminus of PSEN2 and probably PSEN1. Interacts with KCND2 and KCND3. Expressed in brain. Highly expressed by neurons in layers II-IV of cortex and in hippocampus, thalamus and the Purkinje cell layer of the cerebellum.

It localises to the cell membrane. It is found in the cytoplasm. Its subcellular location is the peroxisome. In terms of biological role, regulatory subunit of Kv4/D (Shal)-type voltage-gated rapidly inactivating A-type potassium channels, such as KCND2/Kv4.2 and KCND3/Kv4.3. Modulates channel expression at the cell membrane, gating characteristics, inactivation kinetics and rate of recovery from inactivation in a calcium-dependent and isoform-specific manner. This is Kv channel-interacting protein 4 (Kcnip4) from Mus musculus (Mouse).